We begin with the raw amino-acid sequence, 177 residues long: Large ribosomal subunit protein uL6 (177 aa).

The protein belongs to the universal ribosomal protein uL6 family. Part of the 50S ribosomal subunit.

This protein binds to the 23S rRNA, and is important in its secondary structure. It is located near the subunit interface in the base of the L7/L12 stalk, and near the tRNA binding site of the peptidyltransferase center. This chain is Large ribosomal subunit protein uL6, found in Chelativorans sp. (strain BNC1).